The following is a 453-amino-acid chain: Bifunctional protein GlmU (453 aa).

A pyrophosphorylase region spans residues M1–R226. UDP-N-acetyl-alpha-D-glucosamine is bound by residues L8–G11, K22, Q73, G78–T79, Y100–D102, G137, E151, N166, and N224. D102 lines the Mg(2+) pocket. Residue N224 participates in Mg(2+) binding. Positions A227–Q247 are linker. The segment at G248–K453 is N-acetyltransferase. 2 residues coordinate UDP-N-acetyl-alpha-D-glucosamine: R330 and K348. The active-site Proton acceptor is H360. UDP-N-acetyl-alpha-D-glucosamine-binding residues include Y363 and N374. Residues A377, N383 to Y384, S402, A420, and R437 each bind acetyl-CoA.

The protein in the N-terminal section; belongs to the N-acetylglucosamine-1-phosphate uridyltransferase family. It in the C-terminal section; belongs to the transferase hexapeptide repeat family. As to quaternary structure, homotrimer. Mg(2+) serves as cofactor.

Its subcellular location is the cytoplasm. The enzyme catalyses alpha-D-glucosamine 1-phosphate + acetyl-CoA = N-acetyl-alpha-D-glucosamine 1-phosphate + CoA + H(+). The catalysed reaction is N-acetyl-alpha-D-glucosamine 1-phosphate + UTP + H(+) = UDP-N-acetyl-alpha-D-glucosamine + diphosphate. Its pathway is nucleotide-sugar biosynthesis; UDP-N-acetyl-alpha-D-glucosamine biosynthesis; N-acetyl-alpha-D-glucosamine 1-phosphate from alpha-D-glucosamine 6-phosphate (route II): step 2/2. The protein operates within nucleotide-sugar biosynthesis; UDP-N-acetyl-alpha-D-glucosamine biosynthesis; UDP-N-acetyl-alpha-D-glucosamine from N-acetyl-alpha-D-glucosamine 1-phosphate: step 1/1. It functions in the pathway bacterial outer membrane biogenesis; LPS lipid A biosynthesis. In terms of biological role, catalyzes the last two sequential reactions in the de novo biosynthetic pathway for UDP-N-acetylglucosamine (UDP-GlcNAc). The C-terminal domain catalyzes the transfer of acetyl group from acetyl coenzyme A to glucosamine-1-phosphate (GlcN-1-P) to produce N-acetylglucosamine-1-phosphate (GlcNAc-1-P), which is converted into UDP-GlcNAc by the transfer of uridine 5-monophosphate (from uridine 5-triphosphate), a reaction catalyzed by the N-terminal domain. The sequence is that of Bifunctional protein GlmU from Vibrio campbellii (strain ATCC BAA-1116).